The chain runs to 435 residues: 5-methylthioadenosine/S-adenosylhomocysteine deaminase (435 aa).

2 residues coordinate Zn(2+): His65 and His67. Positions 94, 150, and 189 each coordinate substrate. His216 contributes to the Zn(2+) binding site. 2 residues coordinate substrate: Glu219 and Asp304. Position 304 (Asp304) interacts with Zn(2+).

Belongs to the metallo-dependent hydrolases superfamily. MTA/SAH deaminase family. It depends on Zn(2+) as a cofactor.

It carries out the reaction S-adenosyl-L-homocysteine + H2O + H(+) = S-inosyl-L-homocysteine + NH4(+). The enzyme catalyses S-methyl-5'-thioadenosine + H2O + H(+) = S-methyl-5'-thioinosine + NH4(+). Functionally, catalyzes the deamination of 5-methylthioadenosine and S-adenosyl-L-homocysteine into 5-methylthioinosine and S-inosyl-L-homocysteine, respectively. Is also able to deaminate adenosine. This Bacillus cereus (strain ATCC 14579 / DSM 31 / CCUG 7414 / JCM 2152 / NBRC 15305 / NCIMB 9373 / NCTC 2599 / NRRL B-3711) protein is 5-methylthioadenosine/S-adenosylhomocysteine deaminase.